We begin with the raw amino-acid sequence, 483 residues long: L-2-hydroxyglutarate dehydrogenase, mitochondrial (483 aa).

A mitochondrion-targeting transit peptide spans 1 to 67 (MKHKPETAAF…VDASKTIVRG (67 aa)).

This sequence belongs to the L2HGDH family. The cofactor is FAD.

It localises to the mitochondrion. It carries out the reaction (S)-2-hydroxyglutarate + A = 2-oxoglutarate + AH2. Its function is as follows. Catalyzes the oxidation of (S)-2-hydroxyglutarate to 2-oxoglutarate. Is specific for the (S) enantiomer and possesses very poor activity toward (R)-2-hydroxyglutarate. Has no activity toward related 2-hydroxy acids, such as glycolate, L-lactate or D-lactate. The chain is L-2-hydroxyglutarate dehydrogenase, mitochondrial from Arabidopsis thaliana (Mouse-ear cress).